A 54-amino-acid chain; its full sequence is U-reduvitoxin-Pr7a (54 aa).

An N-terminal signal peptide occupies residues 1-23 (MDFLRILLFVLACIMALFTSAIA). 3 disulfides stabilise this stretch: Cys26–Cys41, Cys33–Cys46, and Cys40–Cys53.

This sequence belongs to the venom Ptu1-like knottin family. In terms of tissue distribution, expressed by the venom gland.

The protein localises to the secreted. Its function is as follows. Binds reversibly and blocks P/Q-type voltage-gated calcium channels (Cav). This chain is U-reduvitoxin-Pr7a, found in Platymeris rhadamanthus (Red spot assassin bug).